A 170-amino-acid polypeptide reads, in one-letter code: FMRFamide-like neuropeptides 6 (170 aa).

A signal peptide spans 1–19 (MNSRGLILTLGVVIAVAFA). A Pyrrolidone carboxylic acid modification is found at Q20. F39 carries the phenylalanine amide modification. The propeptide occupies 42-51 (SDGGNPMEME). The residue at position 60 (F60) is a Phenylalanine amide. A propeptide spanning residues 63 to 81 (RSSGGDEQELVGGDDIDME) is cleaved from the precursor. Phenylalanine amide is present on F90. The propeptide occupies 93-104 (RSGPQEDDMPME). Position 113 is a phenylalanine amide (F113). The propeptide occupies 116-136 (RSSDMEVIGNEGVDGDAHDLF). F145 is subject to Phenylalanine amide. The propeptide occupies 148-159 (RSMGEEEDHDMM). The tract at residues 150 to 170 (MGEEEDHDMMKRKSAYMRFGR) is disordered. Residues 159-170 (MKRKSAYMRFGR) show a composition bias toward basic residues. Residue F168 is modified to Phenylalanine amide.

The protein belongs to the FARP (FMRFamide related peptide) family. As to expression, each flp gene is expressed in a distinct set of neurons. Flp-6 is expressed in the ASE sensory neurons, AFD, ASG, PVT and I1 neurons.

The protein resides in the secreted. In terms of biological role, FMRFamides and FMRFamide-like peptides are neuropeptides. KSAYMRF-amide has an excitatory effect on dissected pharyngeal myogenic muscle system. The sequence is that of FMRFamide-like neuropeptides 6 from Caenorhabditis elegans.